A 252-amino-acid chain; its full sequence is Type III pantothenate kinase (252 aa).

6-13 contacts ATP; the sequence is DIGNTTTE. Substrate contacts are provided by residues tyrosine 100 and 107–110; that span reads GADR. Aspartate 109 acts as the Proton acceptor in catalysis. Aspartate 129 contacts K(+). Threonine 132 contacts ATP. Threonine 184 is a binding site for substrate.

The protein belongs to the type III pantothenate kinase family. As to quaternary structure, homodimer. It depends on NH4(+) as a cofactor. The cofactor is K(+).

It is found in the cytoplasm. The catalysed reaction is (R)-pantothenate + ATP = (R)-4'-phosphopantothenate + ADP + H(+). The protein operates within cofactor biosynthesis; coenzyme A biosynthesis; CoA from (R)-pantothenate: step 1/5. In terms of biological role, catalyzes the phosphorylation of pantothenate (Pan), the first step in CoA biosynthesis. In Sulfurihydrogenibium sp. (strain YO3AOP1), this protein is Type III pantothenate kinase.